Consider the following 106-residue polypeptide: Large ribosomal subunit protein eL42 (106 aa).

It belongs to the eukaryotic ribosomal protein eL42 family.

This Schwanniomyces occidentalis (Yeast) protein is Large ribosomal subunit protein eL42 (RPL44).